Consider the following 553-residue polypeptide: Vacuolar fusion protein MON1 homolog B (553 aa).

N-acetylmethionine is present on M1. Disordered regions lie at residues 1-111 (MEAG…DEDW) and 534-553 (STPPSTSADQAPNNGLFTGL). Over residues 23-35 (FPREEAGDSERVH) the composition is skewed to basic and acidic residues. Polar residues predominate over residues 52–72 (KDQPSSLLSPLPQTEAASSTC). S57 is subject to Phosphoserine. The segment covering 78 to 95 (AAASDSSPPGEPESNSEG) has biased composition (low complexity). A compositionally biased stretch (acidic residues) spans 96 to 108 (QGEDPDDGGDPSD). Over residues 541 to 553 (ADQAPNNGLFTGL) the composition is skewed to polar residues.

Belongs to the MON1/SAND family. In terms of assembly, interacts with CCNT2; down-regulates CCNT2-mediated activation of viral promoters during herpes simplex virus 1/HHV-1 infection. Found in a complex with RMC1, CCZ1 MON1A and MON1B.

The protein is Vacuolar fusion protein MON1 homolog B (Mon1b) of Mus musculus (Mouse).